Here is a 264-residue protein sequence, read N- to C-terminus: uncharacterized protein (264 aa).

Positions 1-22 (MKRKLTICLLIALIFYNGNAKA) are cleaved as a signal peptide. A helical membrane pass occupies residues 227-247 (LLWVIITTGSIIITALTYVGY).

It localises to the membrane. This is an uncharacterized protein from Bacillus subtilis (strain 168).